The chain runs to 119 residues: Achromolysin (119 aa).

Belongs to the peptidase M4 family. The cofactor is Ca(2+). It depends on Zn(2+) as a cofactor.

The protein resides in the secreted. In terms of biological role, has staphylolytic activity. This Achromobacter lyticus protein is Achromolysin.